Here is a 592-residue protein sequence, read N- to C-terminus: Aspartate--tRNA(Asp/Asn) ligase (592 aa).

E182 contributes to the L-aspartate binding site. The tract at residues 206 to 209 is aspartate; the sequence is QIFK. R228 is a binding site for L-aspartate. ATP is bound by residues 228–230 and Q237; that span reads RDE. H455 serves as a coordination point for L-aspartate. ATP is bound at residue E489. R496 lines the L-aspartate pocket. An ATP-binding site is contributed by 541-544; sequence GLDR.

It belongs to the class-II aminoacyl-tRNA synthetase family. Type 1 subfamily. As to quaternary structure, homodimer.

The protein resides in the cytoplasm. It catalyses the reaction tRNA(Asx) + L-aspartate + ATP = L-aspartyl-tRNA(Asx) + AMP + diphosphate. Aspartyl-tRNA synthetase with relaxed tRNA specificity since it is able to aspartylate not only its cognate tRNA(Asp) but also tRNA(Asn). Reaction proceeds in two steps: L-aspartate is first activated by ATP to form Asp-AMP and then transferred to the acceptor end of tRNA(Asp/Asn). The protein is Aspartate--tRNA(Asp/Asn) ligase of Thermoanaerobacter sp. (strain X514).